We begin with the raw amino-acid sequence, 134 residues long: Protein dpy-30 homolog (134 aa).

The segment at 1 to 81 is disordered; sequence MEAKTDAPIS…ETNNMPTRQY (81 aa). Over residues 31-68 the composition is skewed to low complexity; the sequence is AQANPTAAPGAPPSGAIAVGQSTNPVAQQQQQPAVAKK. The segment covering 71–81 has biased composition (polar residues); that stretch reads SETNNMPTRQY.

The protein belongs to the dpy-30 family. Core component of several methyltransferase-containing complexes. Component of the SET1 complex, composed at least of the catalytic subunit Set1, wds/WDR5, Wdr82, Rbbp5, ash2, Cfp1/CXXC1, hcf and Dpy-30L1. Component of the MLL3/4 complex composed at least of the catalytic subunit trr, ash2, Rbbp5, Dpy-30L1, wds, hcf, ptip, Pa1, Utx, Lpt and Ncoa6. As to expression, expressed in larval brain, gonad, imaginal disk and salivary gland and in adult brain, testis, ovary and salivary gland.

The protein resides in the nucleus. Its function is as follows. Component of the SET1 complex that specifically di- and trimethylates 'Lys-4' of histone H3 and of the MLL3/4 complex which also methylates histone H3 'Lys-4'. Inhibits MTF-1 transcription factor activity. This is Protein dpy-30 homolog from Drosophila melanogaster (Fruit fly).